The following is a 473-amino-acid chain: Lysophospholipid acyltransferase 5 (473 aa).

4 helical membrane-spanning segments follow: residues 20–40 (LLIS…FFYN), 43–63 (AQHQ…FNCG), 66–86 (VIHP…MAGT), and 88–108 (ASIY…YWFH). Residues N315 and H351 contribute to the active site. A run of 3 helical transmembrane segments spans residues 341–361 (VITL…FLLF), 396–416 (FIWI…FLMF), and 431–451 (LYFI…MVLL). Residues 470 to 473 (KKEL) carry the Di-lysine motif motif.

It belongs to the membrane-bound acyltransferase family.

Its subcellular location is the endoplasmic reticulum membrane. It catalyses the reaction a 1-acyl-sn-glycero-3-phosphocholine + an acyl-CoA = a 1,2-diacyl-sn-glycero-3-phosphocholine + CoA. It carries out the reaction a 1-acyl-sn-glycero-3-phospho-L-serine + an acyl-CoA = a 1,2-diacyl-sn-glycero-3-phospho-L-serine + CoA. The enzyme catalyses a 1-acyl-sn-glycero-3-phosphoethanolamine + an acyl-CoA = a 1,2-diacyl-sn-glycero-3-phosphoethanolamine + CoA. It participates in lipid metabolism; phospholipid metabolism. Functionally, probable acyltransferase which may mediate the conversion of lysophosphatidylcholine (1-acyl-sn-glycero-3-phosphocholine or LPC) into phosphatidylcholine (1,2-diacyl-sn-glycero-3-phosphocholine or PC) (LPCAT activity). May also catalyze the conversion of lysophosphatidylethanolamine (1-acyl-2-hydroxy-sn-glycero-3-phosphoethanolamine or LPE) into phosphatidylethanolamine (1,2-diacyl-sn-glycero-3-phosphoethanolamine or PE) (LPEAT activity), as well as the conversion of lysophosphatidylserine (1-acyl-2-hydroxy-sn-glycero-3-phospho-L-serine or LPS) into phosphatidylserine (1,2-diacyl-sn-glycero-3-phospho-L-serine or PS) (LPSAT activity). Required for incorporation of arachidonic acid into PC, PE, and PS. This chain is Lysophospholipid acyltransferase 5 (mboa-6), found in Caenorhabditis elegans.